We begin with the raw amino-acid sequence, 432 residues long: 3-phosphoshikimate 1-carboxyvinyltransferase (432 aa).

3-phosphoshikimate-binding residues include Lys23, Ser24, and Arg28. Position 23 (Lys23) interacts with phosphoenolpyruvate. The phosphoenolpyruvate site is built by Gly95 and Arg123. 3-phosphoshikimate contacts are provided by Ser167, Gln169, Asp317, and Lys344. Gln169 serves as a coordination point for phosphoenolpyruvate. Asp317 functions as the Proton acceptor in the catalytic mechanism. The phosphoenolpyruvate site is built by Arg348 and Arg390.

The protein belongs to the EPSP synthase family. Monomer.

The protein localises to the cytoplasm. It catalyses the reaction 3-phosphoshikimate + phosphoenolpyruvate = 5-O-(1-carboxyvinyl)-3-phosphoshikimate + phosphate. Its pathway is metabolic intermediate biosynthesis; chorismate biosynthesis; chorismate from D-erythrose 4-phosphate and phosphoenolpyruvate: step 6/7. Its function is as follows. Catalyzes the transfer of the enolpyruvyl moiety of phosphoenolpyruvate (PEP) to the 5-hydroxyl of shikimate-3-phosphate (S3P) to produce enolpyruvyl shikimate-3-phosphate and inorganic phosphate. The protein is 3-phosphoshikimate 1-carboxyvinyltransferase of Staphylococcus aureus (strain COL).